Here is a 413-residue protein sequence, read N- to C-terminus: Serine hydroxymethyltransferase (413 aa).

(6S)-5,6,7,8-tetrahydrofolate-binding positions include leucine 117 and 121-123 (GHL). Lysine 226 bears the N6-(pyridoxal phosphate)lysine mark. (6S)-5,6,7,8-tetrahydrofolate-binding positions include glutamate 239 and 349–351 (SPF).

Belongs to the SHMT family. Homodimer. The cofactor is pyridoxal 5'-phosphate.

It is found in the cytoplasm. The catalysed reaction is (6R)-5,10-methylene-5,6,7,8-tetrahydrofolate + glycine + H2O = (6S)-5,6,7,8-tetrahydrofolate + L-serine. It functions in the pathway one-carbon metabolism; tetrahydrofolate interconversion. The protein operates within amino-acid biosynthesis; glycine biosynthesis; glycine from L-serine: step 1/1. In terms of biological role, catalyzes the reversible interconversion of serine and glycine with tetrahydrofolate (THF) serving as the one-carbon carrier. This reaction serves as the major source of one-carbon groups required for the biosynthesis of purines, thymidylate, methionine, and other important biomolecules. Also exhibits THF-independent aldolase activity toward beta-hydroxyamino acids, producing glycine and aldehydes, via a retro-aldol mechanism. In Bacillus cereus (strain AH187), this protein is Serine hydroxymethyltransferase.